Here is a 131-residue protein sequence, read N- to C-terminus: UPF0102 protein YraN (131 aa).

The span at 1–19 (MATVPTRSGSPRQLTTKQT) shows a compositional bias: polar residues. Residues 1 to 20 (MATVPTRSGSPRQLTTKQTG) are disordered.

It belongs to the UPF0102 family.

This Shigella boydii serotype 18 (strain CDC 3083-94 / BS512) protein is UPF0102 protein YraN.